Reading from the N-terminus, the 117-residue chain is Immunoglobulin heavy variable 3-74 (117 aa).

The N-terminal stretch at 1–19 is a signal peptide; it reads MEFGLSWVFLVAILKGVQC. The segment at 20–44 is framework-1; the sequence is EVQLVESGGGLVQPGGSLRLSCAAS. The Ig-like domain maps to 20-117; the sequence is EVQLVESGGG…EDTAVYYCAR (98 aa). Cysteine 41 and cysteine 115 are disulfide-bonded. The tract at residues 45–52 is complementarity-determining-1; that stretch reads GFTFSSYW. The interval 53–69 is framework-2; sequence MHWVRQAPGKGLVWVSR. A complementarity-determining-2 region spans residues 70 to 77; it reads INSDGSST. Residues 78 to 115 are framework-3; that stretch reads SYADSVKGRFTISRDNAKNTLYLQMNSLRAEDTAVYYC. The interval 116–117 is complementarity-determining-3; it reads AR.

In terms of assembly, immunoglobulins are composed of two identical heavy chains and two identical light chains; disulfide-linked.

Its subcellular location is the secreted. It localises to the cell membrane. Its function is as follows. V region of the variable domain of immunoglobulin heavy chains that participates in the antigen recognition. Immunoglobulins, also known as antibodies, are membrane-bound or secreted glycoproteins produced by B lymphocytes. In the recognition phase of humoral immunity, the membrane-bound immunoglobulins serve as receptors which, upon binding of a specific antigen, trigger the clonal expansion and differentiation of B lymphocytes into immunoglobulins-secreting plasma cells. Secreted immunoglobulins mediate the effector phase of humoral immunity, which results in the elimination of bound antigens. The antigen binding site is formed by the variable domain of one heavy chain, together with that of its associated light chain. Thus, each immunoglobulin has two antigen binding sites with remarkable affinity for a particular antigen. The variable domains are assembled by a process called V-(D)-J rearrangement and can then be subjected to somatic hypermutations which, after exposure to antigen and selection, allow affinity maturation for a particular antigen. In Homo sapiens (Human), this protein is Immunoglobulin heavy variable 3-74.